The chain runs to 221 residues: Small ribosomal subunit protein uS3 (221 aa).

In terms of domain architecture, KH type-2 spans 39 to 108; the sequence is IRKFVKKELF…NVLINIVEVK (70 aa).

The protein belongs to the universal ribosomal protein uS3 family. Part of the 30S ribosomal subunit. Forms a tight complex with proteins S10 and S14.

Its function is as follows. Binds the lower part of the 30S subunit head. Binds mRNA in the 70S ribosome, positioning it for translation. In Clostridium beijerinckii (strain ATCC 51743 / NCIMB 8052) (Clostridium acetobutylicum), this protein is Small ribosomal subunit protein uS3.